Here is a 126-residue protein sequence, read N- to C-terminus: LQAVAVFKQLPEAAALAAANKRVQNLLKKADAALGEVNESLLQQDEEKALYAAAQGLQPKIAAAVAEGNFRTALSELASVKPQVDAFFDGVMVMAEDAAVKQNRLNLLNRLAEQMNAVADIALLGE.

The protein belongs to the class-II aminoacyl-tRNA synthetase family. Tetramer of two alpha and two beta subunits.

The protein resides in the cytoplasm. The enzyme catalyses tRNA(Gly) + glycine + ATP = glycyl-tRNA(Gly) + AMP + diphosphate. This chain is Glycine--tRNA ligase beta subunit (glyS), found in Neisseria gonorrhoeae.